A 103-amino-acid polypeptide reads, in one-letter code: Large ribosomal subunit protein bL21 (103 aa).

This sequence belongs to the bacterial ribosomal protein bL21 family. Part of the 50S ribosomal subunit. Contacts protein L20.

Functionally, this protein binds to 23S rRNA in the presence of protein L20. The protein is Large ribosomal subunit protein bL21 of Leptothrix cholodnii (strain ATCC 51168 / LMG 8142 / SP-6) (Leptothrix discophora (strain SP-6)).